The following is a 605-amino-acid chain: Leucine-rich repeat-containing protein 40 (605 aa).

A disordered region spans residues 1–21; the sequence is MSRFKRGGKAPDPLSGFRAPK. LRR repeat units follow at residues 83 to 104, 106 to 127, 129 to 151, 152 to 173, 175 to 196, 198 to 219, 221 to 242, 244 to 265, 266 to 287, 290 to 311, 313 to 335, 336 to 357, 429 to 450, 453 to 475, 476 to 497, 499 to 520, 522 to 543, 546 to 567, and 569 to 590; these read DLTK…ISLL, ALVV…IREL, NLQK…QHLQ, NLKS…IGHL, ILEE…VGQL, GLVK…IGKM, NLRQ…VAGM, SLEQ…PFLT, KLKE…HLQN, SLSV…ISLL, GLER…GSLP, NLKS…ILNK, PITT…IVEM, SVYD…CMLL, KLTH…MEAL, RLQS…LYTI, NLET…QLKK, KLST…LGNC, and SLRA…ILAK.

This is Leucine-rich repeat-containing protein 40 (lrrc40) from Xenopus laevis (African clawed frog).